The primary structure comprises 192 residues: 3-hydroxyanthranilate 3,4-dioxygenase 1 (192 aa).

Arg-50 lines the O2 pocket. Residues His-54, Glu-60, and His-102 each contribute to the Fe cation site. A substrate-binding site is contributed by Glu-60. Substrate contacts are provided by Arg-106 and Glu-116. Residues Cys-131, Cys-134, Cys-168, and Cys-171 each contribute to the a divalent metal cation site.

The protein belongs to the 3-HAO family. Fe(2+) is required as a cofactor.

It localises to the cytoplasm. It catalyses the reaction 3-hydroxyanthranilate + O2 = (2Z,4Z)-2-amino-3-carboxymuconate 6-semialdehyde. It participates in cofactor biosynthesis; NAD(+) biosynthesis; quinolinate from L-kynurenine: step 3/3. Catalyzes the oxidative ring opening of 3-hydroxyanthranilate to 2-amino-3-carboxymuconate semialdehyde, which spontaneously cyclizes to quinolinate. In Aspergillus fumigatus (strain CBS 144.89 / FGSC A1163 / CEA10) (Neosartorya fumigata), this protein is 3-hydroxyanthranilate 3,4-dioxygenase 1 (bna1-1).